The chain runs to 394 residues: Elongation factor Tu (394 aa).

In terms of domain architecture, tr-type G spans 10 to 204 (KPHVNVGTIG…ALDTYIPEPE (195 aa)). Residues 19-26 (GHVDHGKT) form a G1 region. 19-26 (GHVDHGKT) contributes to the GTP binding site. Residue T26 coordinates Mg(2+). Residues 60 to 64 (GITIA) form a G2 region. The segment at 81 to 84 (DCPG) is G3. GTP-binding positions include 81–85 (DCPGH) and 136–139 (NKCD). The G4 stretch occupies residues 136-139 (NKCD). Residues 174–176 (SAL) are G5.

Belongs to the TRAFAC class translation factor GTPase superfamily. Classic translation factor GTPase family. EF-Tu/EF-1A subfamily. In terms of assembly, monomer.

It localises to the cytoplasm. It catalyses the reaction GTP + H2O = GDP + phosphate + H(+). Functionally, GTP hydrolase that promotes the GTP-dependent binding of aminoacyl-tRNA to the A-site of ribosomes during protein biosynthesis. This is Elongation factor Tu from Vibrio parahaemolyticus serotype O3:K6 (strain RIMD 2210633).